We begin with the raw amino-acid sequence, 785 residues long: Protein translocase subunit SecA 3 (785 aa).

Residues glutamine 98, 116 to 120 (GEGKT), and aspartate 505 each bind ATP.

The protein belongs to the SecA family. As to quaternary structure, monomer and homodimer. Part of the essential Sec protein translocation apparatus which comprises SecA, SecYEG and auxiliary proteins SecDF. Other proteins may also be involved.

It localises to the cell membrane. Its subcellular location is the cytoplasm. It carries out the reaction ATP + H2O + cellular proteinSide 1 = ADP + phosphate + cellular proteinSide 2.. Functionally, part of the Sec protein translocase complex. Interacts with the SecYEG preprotein conducting channel. Has a central role in coupling the hydrolysis of ATP to the transfer of proteins into and across the cell membrane, serving as an ATP-driven molecular motor driving the stepwise translocation of polypeptide chains across the membrane. The sequence is that of Protein translocase subunit SecA 3 from Mycolicibacterium vanbaalenii (strain DSM 7251 / JCM 13017 / BCRC 16820 / KCTC 9966 / NRRL B-24157 / PYR-1) (Mycobacterium vanbaalenii).